An 827-amino-acid polypeptide reads, in one-letter code: Periplasmic nitrate reductase (827 aa).

Residues 1-34 (MSLTRRDFIKANAVPATAAAAGLATPAIAQPAKA) constitute a signal peptide (tat-type signal). The region spanning 36–92 (IRWDKGVCRFCGTGCSVLVGVQDGRVVATQGDPDSPVNRGLNCIKGYFLSKIMYGED) is the 4Fe-4S Mo/W bis-MGD-type domain. The [4Fe-4S] cluster site is built by C43, C46, C50, and C78. Mo-bis(molybdopterin guanine dinucleotide) is bound by residues K80, Q148, N173, C177, 210–217 (WGSNMAEM), 241–245 (STFEH), 260–262 (QTD), M371, Q375, N481, 507–508 (SD), K530, D557, and 717–726 (TGRVLEHWHS). F793 is a substrate binding site. 2 residues coordinate Mo-bis(molybdopterin guanine dinucleotide): N801 and K818.

It belongs to the prokaryotic molybdopterin-containing oxidoreductase family. NasA/NapA/NarB subfamily. As to quaternary structure, component of the periplasmic nitrate reductase NapAB complex composed of NapA and NapB. [4Fe-4S] cluster is required as a cofactor. The cofactor is Mo-bis(molybdopterin guanine dinucleotide). Post-translationally, predicted to be exported by the Tat system. The position of the signal peptide cleavage has not been experimentally proven.

The protein localises to the periplasm. It carries out the reaction 2 Fe(II)-[cytochrome] + nitrate + 2 H(+) = 2 Fe(III)-[cytochrome] + nitrite + H2O. Its function is as follows. Catalytic subunit of the periplasmic nitrate reductase complex NapAB. Receives electrons from NapB and catalyzes the reduction of nitrate to nitrite. This is Periplasmic nitrate reductase from Paramagnetospirillum magnetotacticum (Aquaspirillum magnetotacticum).